Here is a 71-residue protein sequence, read N- to C-terminus: MHMSLEVLEQLESKVQSAVDNISLLKMELDELKEQNSKLQDENHLLRNEHVAWQERLRALLGKMEQMGESI.

A coiled-coil region spans residues leucine 5 to methionine 67.

The protein belongs to the ZapB family. As to quaternary structure, homodimer. The ends of the coiled-coil dimer bind to each other, forming polymers. Interacts with FtsZ.

It localises to the cytoplasm. Non-essential, abundant cell division factor that is required for proper Z-ring formation. It is recruited early to the divisome by direct interaction with FtsZ, stimulating Z-ring assembly and thereby promoting cell division earlier in the cell cycle. Its recruitment to the Z-ring requires functional FtsA or ZipA. The sequence is that of Cell division protein ZapB from Aeromonas salmonicida (strain A449).